The chain runs to 258 residues: Global transcriptional regulator CodY (258 aa).

The tract at residues 1 to 156 is GAF domain; sequence MSSLLTKTRM…SATIVGMEML (156 aa). The segment at residues 204 to 223 is a DNA-binding region (H-T-H motif); it reads ASKIADKVGITRSVIVNALR.

This sequence belongs to the CodY family.

Its subcellular location is the cytoplasm. In terms of biological role, DNA-binding global transcriptional regulator which is involved in the adaptive response to starvation and acts by directly or indirectly controlling the expression of numerous genes in response to nutrient availability. During rapid exponential growth, CodY is highly active and represses genes whose products allow adaptation to nutrient depletion. The polypeptide is Global transcriptional regulator CodY (Clostridium beijerinckii (strain ATCC 51743 / NCIMB 8052) (Clostridium acetobutylicum)).